The primary structure comprises 620 residues: mRNA cap guanine-N(7) methyltransferase (620 aa).

Disordered regions lie at residues 1–176 and 193–304; these read MLPP…APSS and AHAN…DDEY. Polar residues predominate over residues 29–44; it reads RSPSMSLSPRSQNQSL. Low complexity-rich tracts occupy residues 45–60 and 136–157; these read PYPSSRPGSAAGSAHP and PQPTTTPSSPSTSQHTPYTPHH. One can recognise an mRNA cap 0 methyltransferase domain in the interval 345-620; that stretch reads SPIIGLKKFN…LYMGFAFEKM (276 aa). 354 to 355 lines the mRNA pocket; it reads NN. The S-adenosyl-L-methionine site is built by K358, G377, D399, D428, Q454, and Y459.

The protein belongs to the class I-like SAM-binding methyltransferase superfamily. mRNA cap 0 methyltransferase family.

The protein localises to the nucleus. The catalysed reaction is a 5'-end (5'-triphosphoguanosine)-ribonucleoside in mRNA + S-adenosyl-L-methionine = a 5'-end (N(7)-methyl 5'-triphosphoguanosine)-ribonucleoside in mRNA + S-adenosyl-L-homocysteine. In terms of biological role, responsible for methylating the 5'-cap structure of mRNAs. This is mRNA cap guanine-N(7) methyltransferase (ABD1) from Cryptococcus neoformans var. neoformans serotype D (strain JEC21 / ATCC MYA-565) (Filobasidiella neoformans).